A 213-amino-acid chain; its full sequence is MNKKLLSEFGDPVQRVKNALQSLKRGNGILVLDDENRENEGDMIFAAENMTVNQMALAIRFGSGIVCICLTKEKCKILNLPMMVKKNNSKYKTAFTVSIESAYGITTGVSAYDRIITIKTAIKDNAKPDDLNRPGHVFPLQAHPGGILSRAGHTEAAVDLTKLAGLKPAGVICEVMNDDGSMARMPEIINFSKKYNMPVLIIKDIIEYYNFIN.

D-ribulose 5-phosphate-binding positions include 37 to 38 (RE), aspartate 42, 150 to 154 (RAGHT), and glutamate 174. Glutamate 38 lines the Mg(2+) pocket. Histidine 153 serves as a coordination point for Mg(2+).

The protein belongs to the DHBP synthase family. As to quaternary structure, homodimer. Mg(2+) serves as cofactor. It depends on Mn(2+) as a cofactor.

The enzyme catalyses D-ribulose 5-phosphate = (2S)-2-hydroxy-3-oxobutyl phosphate + formate + H(+). The protein operates within cofactor biosynthesis; riboflavin biosynthesis; 2-hydroxy-3-oxobutyl phosphate from D-ribulose 5-phosphate: step 1/1. Catalyzes the conversion of D-ribulose 5-phosphate to formate and 3,4-dihydroxy-2-butanone 4-phosphate. This chain is 3,4-dihydroxy-2-butanone 4-phosphate synthase, found in Wigglesworthia glossinidia brevipalpis.